The chain runs to 235 residues: Ribosomal RNA small subunit methyltransferase G (235 aa).

Residues Gly74, Phe79, 97-99 (EAT), 125-126 (AE), and Arg144 contribute to the S-adenosyl-L-methionine site.

This sequence belongs to the methyltransferase superfamily. RNA methyltransferase RsmG family.

Its subcellular location is the cytoplasm. Specifically methylates the N7 position of a guanine in 16S rRNA. In Dehalococcoides mccartyi (strain CBDB1), this protein is Ribosomal RNA small subunit methyltransferase G.